A 676-amino-acid chain; its full sequence is Envelope glycoprotein (676 aa).

Positions M1–S32 are cleaved as a signal peptide. The Extracellular portion of the chain corresponds to I33–Q650. N-linked (GlcNAc...) asparagine; by host glycosylation is present at N40. Disulfide bonds link C53–C609, C108–C135, C121–C147, C511–C556, and C601–C608. A receptor-binding region spans residues R54–E201. 11 N-linked (GlcNAc...) asparagine; by host glycosylation sites follow: N204, N228, N238, N257, N268, N296, N317, N333, N346, N386, and N413. Positions E305–T485 are mucin-like region. Over residues A315–T335 the composition is skewed to polar residues. The disordered stretch occupies residues A315–E337. The segment covering T373–T391 has biased composition (polar residues). Disordered stretches follow at residues T373–P392 and T402–L479. Residues D414–A432 show a composition bias toward low complexity. The segment covering E433–T464 has biased composition (polar residues). Residues N436, N454, and N462 are each glycosylated (N-linked (GlcNAc...) asparagine; by host). The interval G524–A539 is fusion peptide. Residues L554–Q595 are a coiled coil. The N-linked (GlcNAc...) asparagine; by host glycan is linked to N563. Residues W615–T634 adopt a coiled-coil conformation. A glycan (N-linked (GlcNAc...) asparagine; by host) is linked at N618. The chain crosses the membrane as a helical span at residues W651–I671. The Important role for host BST2/tetherin antagonism motif lies at G660–A664. S-palmitoyl cysteine; by host attachment occurs at residues C670 and C672. The Cytoplasmic segment spans residues C672 to F676.

This sequence belongs to the filoviruses glycoprotein family. In terms of assembly, homotrimer; each monomer consists of a GP1 and a GP2 subunit linked by disulfide bonds. The resulting peplomers (GP1,2) protrude from the virus surface as spikes. Interacts with host integrin alpha-V/ITGAV. Interacts with host CLEC10A. Also binds to host CD209 and CLEC4M/DC-SIGN(R). Interacts with host FOLR1. Interacts with BST2; this interaction inhibits the antiviral effect of BST2 and this allows viral release from infected cells. Interacts with host FCN1; this interaction enhances viral entry. Interacts with host TLR4; this interaction induces cell death in T-lymphocytes or proinflammatory cytokines and SOCS1 production in monocytes. Interacts with host entry receptor NPC1. As to quaternary structure, GP1 and GP2delta are part of GP1,2delta soluble complexes released by ectodomain shedding. The signal peptide region modulates GP's high mannose glycosylation, thereby determining the efficiency of the interactions with DC-SIGN(R). Post-translationally, N-glycosylated. In terms of processing, glycosylated; glycosylation is essential for the activation of dendritic cells and macrophages. O-glycosylated in the mucin-like region. Post-translationally, palmitoylation is not required for its function. In terms of processing, specific enzymatic cleavages in vivo yield mature proteins. The precursor is processed into GP1 and GP2 by host cell furin in the trans Golgi, and maybe by other host proteases, to yield the mature GP1 and GP2 proteins. The cleavage site corresponds to the furin optimal cleavage sequence [KR]-X-[KR]-R. This cleavage does not seem to be required for function. After the internalization of the virus into cell endosomes, GP1 C-terminus is removed by the endosomal proteases cathepsin B, cathepsin L, or both, leaving a 19-kDa N-terminal fragment which is further digested by cathepsin B. This cleaved 19-kDa GP1 can then bind to the host entry receptor NPC1. Proteolytic processing of GP1,2 by host ADAM17 can remove the transmembrane anchor of GP2 and leads to shedding of complexes consisting in GP1 and truncated GP2 (GP1,2delta).

Its subcellular location is the virion membrane. It localises to the host cell membrane. It is found in the secreted. Functionally, trimeric GP1,2 complexes form the virion surface spikes and mediate the viral entry processes, with GP1 acting as the receptor-binding subunit and GP2 as the membrane fusion subunit. At later times of infection, down-regulates the expression of various host cell surface molecules that are essential for immune surveillance and cell adhesion. Down-modulates several integrins including ITGA1, ITGA2, ITGA3, ITGA4, ITGA5, ITGA6, ITGAV and ITGB1. This decrease in cell adhesion molecules may lead to cell detachment, contributing to the disruption of blood vessel integrity and hemorrhages developed during infection (cytotoxicity). Interacts with host TLR4 and thereby stimulates the differentiation and activation of monocytes leading to bystander death of T-lymphocytes. Down-regulates as well the function of host natural killer cells. Counteracts the antiviral effect of host BST2/tetherin that restricts release of progeny virions from infected cells. However, cooperates with VP40 and host BST2 to activate canonical NF-kappa-B pathway in a manner dependent on neddylation. In terms of biological role, functions as a decoy for anti-GP1,2 antibodies thereby contributing to viral immune evasion. Interacts and activates host macrophages and dendritic cells inducing up-regulation of cytokine transcription. This effect is mediated throught activation of host TLR4. Its function is as follows. Responsible for binding to the receptor(s) on target cells. Interacts with CD209/DC-SIGN and CLEC4M/DC-SIGNR which act as cofactors for virus entry into dendritic cells (DCs) and endothelial cells. Binding to the macrophage specific lectin CLEC10A also seems to enhance virus infectivity. Interaction with FOLR1/folate receptor alpha may be a cofactor for virus entry in some cell types, although results are contradictory. Members of the Tyro3 receptor tyrosine kinase family also seem to be cell entry factors in filovirus infection. Once attached, the virions are internalized through clathrin-dependent endocytosis and/or macropinocytosis. After internalization of the virus into the endosomes of the host cell, proteolysis of GP1 by two cysteine proteases, CTSB/cathepsin B and CTSL/cathepsin L removes the glycan cap and allows GP1 binding to the host entry receptor NPC1. NPC1-binding, Ca(2+) and acidic pH induce a conformational change of GP2, which unmasks its fusion peptide and permit membranes fusion. Acts as a class I viral fusion protein. Under the current model, the protein has at least 3 conformational states: pre-fusion native state, pre-hairpin intermediate state, and post-fusion hairpin state. During viral and target cell membrane fusion, the coiled coil regions (heptad repeats) assume a trimer-of-hairpins structure, positioning the fusion peptide in close proximity to the C-terminal region of the ectodomain. The formation of this structure appears to drive apposition and subsequent fusion of viral and target cell membranes. Responsible for penetration of the virus into the cell cytoplasm by mediating the fusion of the membrane of the endocytosed virus particle with the endosomal membrane. Low pH in endosomes induces an irreversible conformational change in GP2, releasing the fusion hydrophobic peptide. This Epomops franqueti (Franquet's epauletted fruit bat) protein is Envelope glycoprotein (GP).